The chain runs to 227 residues: MICOS complex subunit MIC19 (227 aa).

The N-myristoyl glycine moiety is linked to residue glycine 2. The residue at position 29 (serine 29) is a Phosphoserine. Disordered regions lie at residues 34–61 (DRMK…SDEE) and 73–92 (EQAK…KELD). The span at 39 to 49 (SSPSGSKSQRY) shows a compositional bias: polar residues. The residue at position 49 (tyrosine 49) is a Phosphotyrosine. Residues serine 50, serine 56, and serine 58 each carry the phosphoserine modification. At lysine 142 the chain carries N6-acetyllysine. One can recognise a CHCH domain in the interval 180 to 222 (HPVCADLQAKILQCYRENTHQTLKCSALATQYMHCVNHAKQSM). 2 short sequence motifs (cx9C motif) span residues 183-193 (CADLQAKILQC) and 204-214 (CSALATQYMHC). 2 disulfides stabilise this stretch: cysteine 183/cysteine 214 and cysteine 193/cysteine 204.

It belongs to the MICOS complex subunit Mic19 family. Metazoan Mic19 subfamily. In terms of assembly, component of the mitochondrial contact site and cristae organizing system (MICOS) complex, composed of at least MICOS10/MIC10, CHCHD3/MIC19, CHCHD6/MIC25, APOOL/MIC27, IMMT/MIC60, APOO/MIC23/MIC26 and MICOS13/MIC13. This complex was also known under the names MINOS or MitOS complex. The MICOS complex associates with mitochondrial outer membrane proteins SAMM50, MTX1 and MTX2 (together described as components of the mitochondrial outer membrane sorting assembly machinery (SAM) complex) and DNAJC11, mitochondrial inner membrane protein TMEM11 and with HSPA9. The MICOS and SAM complexes together with DNAJC11 are part of a large protein complex spanning both membranes termed the mitochondrial intermembrane space bridging (MIB) complex. Interacts with HSPA1A/HSPA1B and OPA1, preferentially with the soluble OPA1 form. Interacts with IMMT/MIC60. As to quaternary structure, (Microbial infection) Interacts with human cytomegalovirus protein UL13; this interaction alters cristae architecture. As to expression, detected at low levels in brain, placenta, lung, liver, kidney and pancreas with increased levels in heart and skeletal muscle. Higher expression in primary lung cancers than in normal lung tissue.

The protein localises to the mitochondrion inner membrane. It localises to the cytoplasm. The protein resides in the nucleus. It is found in the mitochondrion. In terms of biological role, component of the MICOS complex, a large protein complex of the mitochondrial inner membrane that plays crucial roles in the maintenance of crista junctions, inner membrane architecture, and formation of contact sites to the outer membrane. Plays an important role in the maintenance of the MICOS complex stability and the mitochondrial cristae morphology. Has also been shown to function as a transcription factor which binds to the BAG1 promoter and represses BAG1 transcription. The protein is MICOS complex subunit MIC19 (CHCHD3) of Homo sapiens (Human).